The following is a 642-amino-acid chain: UvrABC system protein C (642 aa).

The region spanning 20-97 (ERCGVYRMFD…IKKFQPKFNI (78 aa)) is the GIY-YIG domain. Residues 207–242 (KELQENLSKKMEELSSQMRFEEAAEIRDRIKALSYV) enclose the UVR domain.

It belongs to the UvrC family. As to quaternary structure, interacts with UvrB in an incision complex.

The protein localises to the cytoplasm. The UvrABC repair system catalyzes the recognition and processing of DNA lesions. UvrC both incises the 5' and 3' sides of the lesion. The N-terminal half is responsible for the 3' incision and the C-terminal half is responsible for the 5' incision. The sequence is that of UvrABC system protein C from Rickettsia felis (strain ATCC VR-1525 / URRWXCal2) (Rickettsia azadi).